Here is a 633-residue protein sequence, read N- to C-terminus: Chaperone protein dnaK2 (633 aa).

At T196 the chain carries Phosphothreonine; by autocatalysis. Residues 600–633 (ATADGGPAQHAATGGPTSGGGGGDDVIDAEFDKG) form a disordered region. The segment covering 624-633 (DVIDAEFDKG) has biased composition (acidic residues).

The protein belongs to the heat shock protein 70 family.

In terms of biological role, acts as a chaperone. The chain is Chaperone protein dnaK2 (dnaK2) from Streptomyces avermitilis (strain ATCC 31267 / DSM 46492 / JCM 5070 / NBRC 14893 / NCIMB 12804 / NRRL 8165 / MA-4680).